The sequence spans 388 residues: MNARKAPEFPAWPQYDDAERNGLVRALEQGQWWRMGGDEVNSFEREFAAHHGAAHALAVTNGTHALELALQVMGVGPGTEVIVPAFTFISSSQAAQRLGAVTVPVDVDAATYNLDPEAVAAAVTPRTKVIMPVHMAGLMADMDALAKISADTGVPLLQDAAHAHGARWQGKRVGELDSIATFSFQNGKLMTAGEGGAVVFPDGETEKYETAFLRHSCGRPRDDRRYFHKIAGSNMRLNEFSASVLRAQLARLDEQIAVRDERWTLLSRLLGAIDGVVPQGGDVRADRNSHYMAMFRIPGLTEERRNALVDRLVEAGLPAFAAFRAIYRTDAFWELGAPDESVDAIARRCPNTDAISSDCVWLHHRVLLAGEPELHATAEIIADAVARA.

Position 188 is an N6-(pyridoxal phosphate)lysine (Lys-188).

It belongs to the degT/dnrJ/eryC1 family. Homodimer. Can interact with RifL. The cofactor is pyridoxal 5'-phosphate.

It carries out the reaction 5-deoxy-5-amino-3-dehydroshikimate = 3-amino-5-hydroxybenzoate + H2O + H(+). The enzyme catalyses UDP-3-oxo-alpha-D-glucose + L-glutamine = UDP-alpha-D-kanosamine + 2-oxoglutaramate. Its pathway is antibiotic biosynthesis; rifamycin B biosynthesis. With respect to regulation, AHBA synthase activity is activated by 3-deoxy-D-arabinoheptulosonic acid 7-phosphate (DAHP), an intermediate in the shikimate pathway, and is irreversibly inhibited by gabaculine (5-amino-1,3-cyclohexadiene-1-carboxylate). Functionally, catalyzes the dehydration and aromatization of 5-amino-5-deoxy-3-dehydroshikimate (aminoDHS) to 3-amino-5-hydroxybenzoate (AHBA), a compound that then serves as the starter unit for the assembly of a polyketide during the biosynthesis of rifamycin B and other ansamycin antibiotics. Cannot utilize 5-deoxy-5-amino-3-dehydroquinate (aminoDHQ), 5-deoxy-5-aminoshikimate (aminoSA), quinate, 3-dehydroquinate, or 3-dehydroshikimate (DHS) as substrate. In terms of biological role, in a complex with RifL, RifK may have a second function in the AHBA pathway, acting as a transaminase introducing the nitrogen into the first pathway intermediate, UDP-3-keto-D-glucose, to give UDP-kanosamine. Appears to use glutamine as the nitrogen donor; NH(4)(+) or asparagine are 30% less effective as nitrogen donors and neither glutamate nor aspartate show activity. In Amycolatopsis mediterranei (strain S699) (Nocardia mediterranei), this protein is 3-amino-5-hydroxybenzoate synthase (rifK).